Reading from the N-terminus, the 479-residue chain is ATP synthase subunit beta (479 aa).

158-165 (GGAGLGKT) lines the ATP pocket.

It belongs to the ATPase alpha/beta chains family. As to quaternary structure, F-type ATPases have 2 components, CF(1) - the catalytic core - and CF(0) - the membrane proton channel. CF(1) has five subunits: alpha(3), beta(3), gamma(1), delta(1), epsilon(1). CF(0) has three main subunits: a(1), b(2) and c(9-12). The alpha and beta chains form an alternating ring which encloses part of the gamma chain. CF(1) is attached to CF(0) by a central stalk formed by the gamma and epsilon chains, while a peripheral stalk is formed by the delta and b chains.

It localises to the cell inner membrane. It catalyses the reaction ATP + H2O + 4 H(+)(in) = ADP + phosphate + 5 H(+)(out). Functionally, produces ATP from ADP in the presence of a proton gradient across the membrane. The catalytic sites are hosted primarily by the beta subunits. The polypeptide is ATP synthase subunit beta (Rhodopirellula baltica (strain DSM 10527 / NCIMB 13988 / SH1)).